A 672-amino-acid polypeptide reads, in one-letter code: Single-strand DNA endonuclease ASTE1 (672 aa).

Residues 349–398 (TFLHTQVENMQRPNAHRISQPIRQIIYGLLLNGPSHAEDIAQNTLPSQLL) are interaction with SHLD2.

This sequence belongs to the asteroid family. Interacts with SHLD1, SHLD2, SHLD3, RIF1 and MAD2L2/REV7.

Structure-specific DNA endonuclease that specifically cleaves single-stranded DNA and 3' overhang DNA. Contributes to the control of DNA double-strand break repair choice by antagonizing BRCA1-dependent homologous recombination (HR) and promoting non-homologous end-joining (NHEJ). Recruited to the single-stranded DNA ends by SHLD2 and cleaves the 3' exposed DNA ends, therefore inhibiting DNA end resection (necessary for HR) and promoting DNA end protection (necessary for NHEJ). The protein is Single-strand DNA endonuclease ASTE1 (Aste1) of Mus musculus (Mouse).